We begin with the raw amino-acid sequence, 87 residues long: uncharacterized protein (87 aa).

The helical transmembrane segment at 13–33 (LMIVSAVFGGIGIITTIVFVI) threads the bilayer. Residues 66-87 (EECGGSTETSSSKPKKKAKKEV) form a disordered region. Over residues 78 to 87 (KPKKKAKKEV) the composition is skewed to basic residues.

Its subcellular location is the membrane. This is an uncharacterized protein from Caenorhabditis elegans.